The sequence spans 307 residues: ATP synthase gamma chain (307 aa).

It belongs to the ATPase gamma chain family. F-type ATPases have 2 components, CF(1) - the catalytic core - and CF(0) - the membrane proton channel. CF(1) has five subunits: alpha(3), beta(3), gamma(1), delta(1), epsilon(1). CF(0) has three main subunits: a, b and c.

The protein localises to the cell membrane. Its function is as follows. Produces ATP from ADP in the presence of a proton gradient across the membrane. The gamma chain is believed to be important in regulating ATPase activity and the flow of protons through the CF(0) complex. The chain is ATP synthase gamma chain from Bifidobacterium longum subsp. infantis (strain ATCC 15697 / DSM 20088 / JCM 1222 / NCTC 11817 / S12).